Here is a 631-residue protein sequence, read N- to C-terminus: Glutamyl-tRNA(Gln) amidotransferase subunit E (631 aa).

Belongs to the GatB/GatE family. GatE subfamily. Heterodimer of GatD and GatE.

The enzyme catalyses L-glutamyl-tRNA(Gln) + L-glutamine + ATP + H2O = L-glutaminyl-tRNA(Gln) + L-glutamate + ADP + phosphate + H(+). Functionally, allows the formation of correctly charged Gln-tRNA(Gln) through the transamidation of misacylated Glu-tRNA(Gln) in organisms which lack glutaminyl-tRNA synthetase. The reaction takes place in the presence of glutamine and ATP through an activated gamma-phospho-Glu-tRNA(Gln). The GatDE system is specific for glutamate and does not act on aspartate. This Methanococcus maripaludis (strain C6 / ATCC BAA-1332) protein is Glutamyl-tRNA(Gln) amidotransferase subunit E.